The following is a 331-amino-acid chain: Thiamine thiazole synthase (331 aa).

Substrate-binding positions include S82, 103 to 104 (EA), G111, and V176. Position 210 is a 2,3-didehydroalanine (Cys) (C210). Residues D212, H242, M296, and 306–308 (RMG) contribute to the substrate site.

The protein belongs to the THI4 family. In terms of assembly, homooctamer. Fe cation serves as cofactor. Post-translationally, during the catalytic reaction, a sulfide is transferred from Cys-210 to a reaction intermediate, generating a dehydroalanine residue.

The protein resides in the cytoplasm. The protein localises to the nucleus. It catalyses the reaction [ADP-thiazole synthase]-L-cysteine + glycine + NAD(+) = [ADP-thiazole synthase]-dehydroalanine + ADP-5-ethyl-4-methylthiazole-2-carboxylate + nicotinamide + 3 H2O + 2 H(+). In terms of biological role, involved in biosynthesis of the thiamine precursor thiazole. Catalyzes the conversion of NAD and glycine to adenosine diphosphate 5-(2-hydroxyethyl)-4-methylthiazole-2-carboxylic acid (ADT), an adenylated thiazole intermediate. The reaction includes an iron-dependent sulfide transfer from a conserved cysteine residue of the protein to a thiazole intermediate. The enzyme can only undergo a single turnover, which suggests it is a suicide enzyme. May have additional roles in adaptation to various stress conditions and in DNA damage tolerance. This Eremothecium gossypii (strain ATCC 10895 / CBS 109.51 / FGSC 9923 / NRRL Y-1056) (Yeast) protein is Thiamine thiazole synthase.